The primary structure comprises 838 residues: Kinesin-like protein KIFC2 (838 aa).

The segment covering 23 to 32 (AAAAEPGDPA) has biased composition (low complexity). 2 disordered regions span residues 23–48 (AAAA…DLPA) and 140–185 (LLQG…GQQP). Polar residues predominate over residues 156–167 (DGSTSQEESPSH). Residues 186 to 351 (LQLEEDQRAW…SLRQGCGDLR (166 aa)) adopt a coiled-coil conformation. The Kinesin motor domain maps to 409 to 740 (NIRVLCRLRP…ARRSPRGRRI (332 aa)). Residue 484–491 (GQTGTGKT) participates in ATP binding. The interval 718 to 792 (RSPPTRARPP…SPGPPAPLRR (75 aa)) is disordered.

Belongs to the TRAFAC class myosin-kinesin ATPase superfamily. Kinesin family.

The protein resides in the cytoplasm. It is found in the cytoskeleton. In terms of biological role, may play a role in microtubule-dependent retrograde axonal transport. May function as the motor for the transport of multivesicular body (MVB)-like organelles in dendrites. This is Kinesin-like protein KIFC2 (KIFC2) from Homo sapiens (Human).